Consider the following 458-residue polypeptide: Paired box protein Pax-8 (458 aa).

The paired DNA-binding region spans Gly18–Lys144. Residues Gly21–Thr77 are PAI subdomain. The interval Lys96–Lys144 is RED subdomain. Positions Pro198–Ser217 are disordered.

Its subcellular location is the nucleus. Its function is as follows. Probable transcription factor. Involved in kidney development, acting synergistically with lhx1/lim-1 to establish the pronephric primordium in late gastrulae/early neurulae. The polypeptide is Paired box protein Pax-8 (Xenopus tropicalis (Western clawed frog)).